We begin with the raw amino-acid sequence, 229 residues long: Large ribosomal subunit protein bL25 (229 aa).

2 disordered regions span residues 1–21 (MDII…ASSR) and 182–229 (NAPE…KDKK). Residues 195-222 (PAAGAPAAGAAAAPAAGAAAPAKGAAPA) show a composition bias toward low complexity.

It belongs to the bacterial ribosomal protein bL25 family. CTC subfamily. In terms of assembly, part of the 50S ribosomal subunit; part of the 5S rRNA/L5/L18/L25 subcomplex. Contacts the 5S rRNA. Binds to the 5S rRNA independently of L5 and L18.

Functionally, this is one of the proteins that binds to the 5S RNA in the ribosome where it forms part of the central protuberance. In Sorangium cellulosum (strain So ce56) (Polyangium cellulosum (strain So ce56)), this protein is Large ribosomal subunit protein bL25.